The following is a 312-amino-acid chain: Protoheme IX farnesyltransferase (312 aa).

The next 8 helical transmembrane spans lie at 34-54 (LVIFTALIGLLIAPGHFHPVL), 56-76 (ITSLLCIAVGAGASGALNMAL), 119-139 (ILVNWYAGALLAFTIFFYVVI), 152-172 (IVIGGAAGALPPVVAWVAATG), 179-199 (LLLFLIIFFWTPPHFWALALF), 225-245 (ILLYTILLVAIAAAPWPLGYF), 248-268 (VYGVVSLALGAGMLWFAIEVF), and 283-303 (LFAFSILYLFALFATLGLEAV).

Belongs to the UbiA prenyltransferase family. Protoheme IX farnesyltransferase subfamily.

It is found in the cell inner membrane. It catalyses the reaction heme b + (2E,6E)-farnesyl diphosphate + H2O = Fe(II)-heme o + diphosphate. It participates in porphyrin-containing compound metabolism; heme O biosynthesis; heme O from protoheme: step 1/1. In terms of biological role, converts heme B (protoheme IX) to heme O by substitution of the vinyl group on carbon 2 of heme B porphyrin ring with a hydroxyethyl farnesyl side group. This chain is Protoheme IX farnesyltransferase, found in Bradyrhizobium sp. (strain BTAi1 / ATCC BAA-1182).